The chain runs to 342 residues: Protease HtpX homolog (342 aa).

Transmembrane regions (helical) follow at residues 6–26 (TAMLLAFMTALFMGVGFLIGG) and 28–48 (GGMMIALVIAGAMNLFSYWNS). His130 contacts Zn(2+). Glu131 is an active-site residue. His134 provides a ligand contact to Zn(2+). 2 consecutive transmembrane segments (helical) span residues 145–165 (ITATLAGAISMLGNFAFFFGG) and 173–193 (GGGIIGPLVAMIVAPFAAMLV). Glu202 lines the Zn(2+) pocket. Residues 290-342 (PQHSKPAASGPWGSSAERSTDDPWGVKGGASTRSVPKIGRRGKDNDAPKGPWN) form a disordered region.

Belongs to the peptidase M48B family. Zn(2+) is required as a cofactor.

It localises to the cell inner membrane. The chain is Protease HtpX homolog from Allorhizobium ampelinum (strain ATCC BAA-846 / DSM 112012 / S4) (Agrobacterium vitis (strain S4)).